The following is a 279-amino-acid chain: Putative biopolymer transport protein ExbB homolog (279 aa).

3 consecutive transmembrane segments (helical) span residues 19-39, 126-146, and 162-182; these read SGGV…ITAL, IIEV…WYTF, and IYVA…LMPL.

It belongs to the ExbB/TolQ family.

The protein resides in the cell membrane. The protein is Putative biopolymer transport protein ExbB homolog of Methanothermobacter thermautotrophicus (strain ATCC 29096 / DSM 1053 / JCM 10044 / NBRC 100330 / Delta H) (Methanobacterium thermoautotrophicum).